The following is a 236-amino-acid chain: tRNA (guanine-N(7)-)-methyltransferase (236 aa).

Residues M1 to T23 are disordered. D69, E94, N121, and D144 together coordinate S-adenosyl-L-methionine. D144 is a catalytic residue. Positions 148 and 180 each coordinate substrate.

It belongs to the class I-like SAM-binding methyltransferase superfamily. TrmB family.

It carries out the reaction guanosine(46) in tRNA + S-adenosyl-L-methionine = N(7)-methylguanosine(46) in tRNA + S-adenosyl-L-homocysteine. It functions in the pathway tRNA modification; N(7)-methylguanine-tRNA biosynthesis. Functionally, catalyzes the formation of N(7)-methylguanine at position 46 (m7G46) in tRNA. The protein is tRNA (guanine-N(7)-)-methyltransferase of Synechococcus sp. (strain JA-3-3Ab) (Cyanobacteria bacterium Yellowstone A-Prime).